The chain runs to 149 residues: UPF0260 protein PFLU_1520 (149 aa).

Belongs to the UPF0260 family.

In Pseudomonas fluorescens (strain SBW25), this protein is UPF0260 protein PFLU_1520.